Consider the following 829-residue polypeptide: Potassium voltage-gated channel unc-103 (829 aa).

A disordered region spans residues 1–76 (MKTAVFGRDS…PRASHSSRRT (76 aa)). Over 1–123 (MKTAVFGRDS…YSPFKAVWDW (123 aa)) the chain is Cytoplasmic. Positions 46–66 (GVSGTGGGGSGGLQGAPGAGG) are enriched in gly residues. Residues 124–144 (IILLLVIYTAVFTPYVAAFLL) form a helical membrane-spanning segment. Topologically, residues 145–158 (RELQDTAKKSRFTE) are extracellular. A helical membrane pass occupies residues 159–179 (PLEIVDLIVDIMFIVDIIINF). Residues 180–203 (RTTYVNENDEACQVVSDPGKIATH) lie on the Cytoplasmic side of the membrane. Residues 204-224 (YFKGWFIIDMVAAVPFDLLLV) traverse the membrane as a helical segment. Over 225-234 (STNSDETTTL) the chain is Extracellular. Residues 235 to 255 (IGLLKTARLLRLVRVARKLDR) traverse the membrane as a helical; Voltage-sensor segment. The Cytoplasmic portion of the chain corresponds to 256–261 (YSEYGA). Residues 262–282 (AVLLLLMATFALIAHWLACIW) traverse the membrane as a helical segment. At 283-327 (YAIGSAELSHKEYTWLHQLSKQLAQPYTSTNGTIPTGGPTLKSRY) the chain is on the extracellular side. Asn313 carries N-linked (GlcNAc...) asparagine glycosylation. An intramembrane region (pore-forming) is located at residues 328–348 (VTSLYFTLSTITSIGFGNVSA). Topologically, residues 349–354 (TTDSEK) are extracellular. The helical transmembrane segment at 355–375 (IFTIIMMILGSLMYASVFGNV) threads the bilayer. The Cytoplasmic segment spans residues 376 to 829 (SAIIQRLYSG…TPTQETDTIL (454 aa)). An a nucleoside 3',5'-cyclic phosphate-binding site is contributed by 458 to 559 (AFAGSTPGCL…ILRDDLLDVL (102 aa)). The tract at residues 601–674 (SMNKDRYTTP…PLLRRSTNHH (74 aa)) is disordered. The segment covering 603-615 (NKDRYTTPPDGDH) has biased composition (basic and acidic residues). The span at 640–650 (SAGSRSSSRCS) shows a compositional bias: low complexity.

This sequence belongs to the potassium channel family. H (Eag) (TC 1.A.1.20) subfamily. Kv11.1/KCNH2 sub-subfamily. In terms of assembly, the potassium channel is composed of a homo- or heterotetrameric complex. Interacts with dnj-1; dnj-1 chaperone promotes tetramerization.

Its subcellular location is the cell membrane. Functionally, pore-forming (alpha) subunit of voltage-gated inwardly rectifying potassium channel. Channel properties are modulated by cAMP and subunit assembly. Regulates the movements of the male's copulatory spicules before and during male mating behavior. This is Potassium voltage-gated channel unc-103 from Caenorhabditis elegans.